A 1320-amino-acid chain; its full sequence is Junctional cadherin 5-associated protein (1320 aa).

Disordered regions lie at residues 1–124 (MYSV…GSGS), 183–202 (KKPR…KRPQ), 209–233 (YPFV…ALSP), 252–426 (GVPK…SIQY), 452–492 (DDTS…NEQS), 676–720 (ASSP…PTPT), 741–802 (NQKP…STTG), and 835–942 (ELQE…QKSQ). 2 stretches are compositionally biased toward polar residues: residues 58–71 (RTSL…NSEN) and 95–107 (NQPS…QPQS). The span at 108-119 (GRDDIYWSRGRQ) shows a compositional bias: basic and acidic residues. Residues 255 to 267 (KVPPYPPSFPSPS) show a composition bias toward pro residues. Positions 308 to 329 (FQDHQHRDPRGSYPTRSKDPSH) are enriched in basic and acidic residues. Residues 338–356 (LEPPVYVPPPSYRSPPQHI) are compositionally biased toward pro residues. The segment covering 369–378 (VSSNQSQQQV) has biased composition (polar residues). Pro residues predominate over residues 404–415 (GSPPQGLPPQPY). Polar residues predominate over residues 454 to 465 (TSYNPGLLTTQE). A Phosphothreonine modification is found at Thr484. Ser486 is modified (phosphoserine). Polar residues predominate over residues 741–782 (NQKPSVPHLQGQTSLSPSRNSAFSRTSSAINQASMSKGTSDQ). Over residues 849–859 (EDSEAEQPEDC) the composition is skewed to acidic residues. Phosphoserine is present on Ser851. Over residues 865–877 (KSWALQGTRTAQQ) the composition is skewed to polar residues. Residues Ser1027 and Ser1033 each carry the phosphoserine modification. Disordered stretches follow at residues 1085-1116 (ARRT…SLAL) and 1153-1174 (SDVD…KDEE). Phosphoserine is present on residues Ser1245 and Ser1248. The disordered stretch occupies residues 1275-1320 (DEAWQAGHLPSVSQNENGHPEVPRDKMSDQDLWCADSYDPSRVERV). The span at 1292-1303 (GHPEVPRDKMSD) shows a compositional bias: basic and acidic residues.

Its subcellular location is the cell junction. It is found in the adherens junction. The protein is Junctional cadherin 5-associated protein of Mus musculus (Mouse).